The following is a 238-amino-acid chain: MAGHSKWANTKYRKERADHKRGKIFSRTIKELMAAVKMGGPDPKTNARLRMIIQKAKDQNIPNENIERNLKKATSADQKNFENVTYELYGHGGVGIIVEAMTDNKNRTASDMRIAVNKRGGSLVEPGSVLYNFVRKGACYVPKSSIDEAVLLPHVIDVGAEDLDNDDDEHFLVLCDPVELASVKEKLTALGVACSEEKLIYVPLRLVDCDEQDGEANLALIEWLEKIDDVDEVYHNMA.

This sequence belongs to the TACO1 family.

It localises to the cytoplasm. This chain is Probable transcriptional regulatory protein CAB166, found in Chlamydia abortus (strain DSM 27085 / S26/3) (Chlamydophila abortus).